We begin with the raw amino-acid sequence, 374 residues long: 1,3,6,8-tetrahydroxynaphthalene synthase (374 aa).

The active site involves Cys-138.

Belongs to the thiolase-like superfamily. Chalcone/stilbene synthases family. In terms of assembly, homodimer.

The enzyme catalyses 5 malonyl-CoA + 5 H(+) = naphthalene-1,3,6,8-tetrol + 5 CO2 + 5 CoA + H2O. The protein operates within pigment biosynthesis; melanin biosynthesis. In terms of biological role, involved in the biosynthesis of melanin but also various secondary metabolites containing a naphthoquinone ring. Catalyzes the iterative condensation of five CoA-linked malonyl units to form a pentaketide intermediate. THNS subsequently catalyzes the dual intramolecular Claisen and aldol condensations of this linear intermediate to produce the fused ring of 1,3,6,8-tetrahydroxynaphthalene (THN). In Streptomyces coelicolor (strain ATCC BAA-471 / A3(2) / M145), this protein is 1,3,6,8-tetrahydroxynaphthalene synthase.